Here is a 562-residue protein sequence, read N- to C-terminus: Glycine betaine/proline/choline/ectoine transporter VP1456 (562 aa).

The next 12 helical transmembrane spans lie at 68-88, 110-130, 147-167, 203-223, 243-263, 287-307, 322-342, 373-393, 404-424, 456-476, 503-523, and 531-551; these read PVFG…LLVE, FFMW…FSPL, VSWL…FWSV, WGVH…FFAF, AWGW…LFGL, GIGT…LSVV, MIVA…TAMG, WTVF…MFIA, FLFA…SVFG, VLPY…VFFI, IFWA…GGKE, and GVVA…VSLV.

It belongs to the BCCT transporter (TC 2.A.15) family.

It localises to the cell inner membrane. Involved in the uptake of osmoprotectants. Can transport glycine betaine, proline, choline and ectoine. This Vibrio parahaemolyticus serotype O3:K6 (strain RIMD 2210633) protein is Glycine betaine/proline/choline/ectoine transporter VP1456.